We begin with the raw amino-acid sequence, 366 residues long: Ubiquitin carboxyl-terminal hydrolase 46 (366 aa).

The region spanning 35–365 is the USP domain; it reads FGLVNFGNTC…SGYILFYQSR (331 aa). Residue cysteine 44 is the Nucleophile of the active site. Zn(2+)-binding residues include cysteine 182, cysteine 185, cysteine 229, and cysteine 232. Histidine 313 (proton acceptor) is an active-site residue.

This sequence belongs to the peptidase C19 family. USP12/USP46 subfamily. Interacts with WDR48. Interacts with WDR20. Interacts with DMWD. Component of the USP46/WDR20/WDR48 deubiquitinating complex. Detected in lung and spleen, and at lower levels in brain, kidney, testis and liver.

It localises to the cytoplasm. The enzyme catalyses Thiol-dependent hydrolysis of ester, thioester, amide, peptide and isopeptide bonds formed by the C-terminal Gly of ubiquitin (a 76-residue protein attached to proteins as an intracellular targeting signal).. In terms of biological role, deubiquitinating enzyme that plays a role in behavior, possibly by regulating GABA action. May act by mediating the deubiquitination of GAD1/GAD67. Has almost no deubiquitinating activity by itself and requires the interaction with WDR48 to have a high activity. Not involved in deubiquitination of monoubiquitinated FANCD2. This chain is Ubiquitin carboxyl-terminal hydrolase 46, found in Rattus norvegicus (Rat).